A 368-amino-acid chain; its full sequence is Cobalt-precorrin-5B C(1)-methyltransferase (368 aa).

It belongs to the CbiD family.

The enzyme catalyses Co-precorrin-5B + S-adenosyl-L-methionine = Co-precorrin-6A + S-adenosyl-L-homocysteine. The protein operates within cofactor biosynthesis; adenosylcobalamin biosynthesis; cob(II)yrinate a,c-diamide from sirohydrochlorin (anaerobic route): step 6/10. In terms of biological role, catalyzes the methylation of C-1 in cobalt-precorrin-5B to form cobalt-precorrin-6A. This is Cobalt-precorrin-5B C(1)-methyltransferase from Brucella abortus (strain S19).